The sequence spans 77 residues: Acyl carrier protein (77 aa).

Positions 2–77 (SDIADRVKKI…DAVKFISDAS (76 aa)) constitute a Carrier domain. Ser37 is subject to O-(pantetheine 4'-phosphoryl)serine.

Belongs to the acyl carrier protein (ACP) family. Post-translationally, 4'-phosphopantetheine is transferred from CoA to a specific serine of apo-ACP by AcpS. This modification is essential for activity because fatty acids are bound in thioester linkage to the sulfhydryl of the prosthetic group.

It localises to the cytoplasm. Its pathway is lipid metabolism; fatty acid biosynthesis. Carrier of the growing fatty acid chain in fatty acid biosynthesis. The protein is Acyl carrier protein of Roseobacter denitrificans (strain ATCC 33942 / OCh 114) (Erythrobacter sp. (strain OCh 114)).